A 330-amino-acid chain; its full sequence is Anthranilate phosphoribosyltransferase (330 aa).

5-phospho-alpha-D-ribose 1-diphosphate contacts are provided by residues G79, 82-83, T87, 89-92, 107-115, and S119; these read GD, NIST, and KHGNYGVSS. G79 lines the anthranilate pocket. S91 is a binding site for Mg(2+). N110 contributes to the anthranilate binding site. R165 contributes to the anthranilate binding site. The Mg(2+) site is built by D223 and E224.

This sequence belongs to the anthranilate phosphoribosyltransferase family. As to quaternary structure, homodimer. Requires Mg(2+) as cofactor.

The catalysed reaction is N-(5-phospho-beta-D-ribosyl)anthranilate + diphosphate = 5-phospho-alpha-D-ribose 1-diphosphate + anthranilate. Its pathway is amino-acid biosynthesis; L-tryptophan biosynthesis; L-tryptophan from chorismate: step 2/5. Catalyzes the transfer of the phosphoribosyl group of 5-phosphorylribose-1-pyrophosphate (PRPP) to anthranilate to yield N-(5'-phosphoribosyl)-anthranilate (PRA). The sequence is that of Anthranilate phosphoribosyltransferase from Flavobacterium johnsoniae (strain ATCC 17061 / DSM 2064 / JCM 8514 / BCRC 14874 / CCUG 350202 / NBRC 14942 / NCIMB 11054 / UW101) (Cytophaga johnsonae).